Here is a 26-residue protein sequence, read N- to C-terminus: Delta-hemolysin (26 aa).

The residue at position 1 (Met-1) is an N-formylmethionine.

It belongs to the delta-lysin family.

Its subcellular location is the secreted. The protein localises to the host cell membrane. Functionally, lyses erythrocytes and many other mammalian cells. The protein is Delta-hemolysin (hld) of Staphylococcus aureus (strain MSSA476).